The chain runs to 244 residues: Cobalt transport protein CbiM (244 aa).

The signal sequence occupies residues 1–28; it reads MKLLKNKKVTFVALLAILAVLSTQSVSA. Helical transmembrane passes span 36-56, 71-91, 108-128, 135-155, 166-186, and 208-228; these read LPLFWCIFWFAVFLPFFVVGL, TMLALSGAFIFILSSLKIPSV, FGPSVISVLGTICLLFQALLL, TLGANAFSMAVVGPFVGYFVY, PVSIFICAVIADLATYATTSI, and GVFLTTQIPIAIVEGLLTVVL.

Belongs to the CbiM family. As to quaternary structure, forms an energy-coupling factor (ECF) transporter complex composed of an ATP-binding protein (A component, CbiO), a transmembrane protein (T component, CbiQ) and 2 possible substrate-capture proteins (S components, CbiM and CbiN) of unknown stoichimetry.

The protein localises to the cell membrane. It functions in the pathway cofactor biosynthesis; adenosylcobalamin biosynthesis. Part of the energy-coupling factor (ECF) transporter complex CbiMNOQ involved in cobalt import. The protein is Cobalt transport protein CbiM of Streptococcus sanguinis (strain SK36).